Reading from the N-terminus, the 267-residue chain is Glucosamine-6-phosphate deaminase (267 aa).

Residue Asp72 is the Proton acceptor; for enolization step of the active site. The For ring-opening step role is filled by Asp141. Catalysis depends on His143, which acts as the Proton acceptor; for ring-opening step. Catalysis depends on Glu148, which acts as the For ring-opening step.

The protein belongs to the glucosamine/galactosamine-6-phosphate isomerase family. NagB subfamily. In terms of assembly, homohexamer.

It carries out the reaction alpha-D-glucosamine 6-phosphate + H2O = beta-D-fructose 6-phosphate + NH4(+). The protein operates within amino-sugar metabolism; N-acetylneuraminate degradation; D-fructose 6-phosphate from N-acetylneuraminate: step 5/5. With respect to regulation, allosterically activated by N-acetylglucosamine 6-phosphate (GlcNAc6P). Functionally, catalyzes the reversible isomerization-deamination of glucosamine 6-phosphate (GlcN6P) to form fructose 6-phosphate (Fru6P) and ammonium ion. The chain is Glucosamine-6-phosphate deaminase from Mannheimia succiniciproducens (strain KCTC 0769BP / MBEL55E).